Consider the following 380-residue polypeptide: Cytochrome b (380 aa).

Helical transmembrane passes span 34-54 (FGSL…LLAM), 78-99 (WLIR…YFHI), 114-134 (WNTG…GYVL), and 179-199 (FFAL…IHLT). 2 residues coordinate heme b: H84 and H98. Positions 183 and 197 each coordinate heme b. H202 is an a ubiquinone binding site. 4 consecutive transmembrane segments (helical) span residues 227 to 247 (TKDI…ALFS), 289 to 309 (LGGV…PLLH), 321 to 341 (LSQL…WIGS), and 348 to 368 (FIII…ILFP).

This sequence belongs to the cytochrome b family. In terms of assembly, the cytochrome bc1 complex contains 11 subunits: 3 respiratory subunits (MT-CYB, CYC1 and UQCRFS1), 2 core proteins (UQCRC1 and UQCRC2) and 6 low-molecular weight proteins (UQCRH/QCR6, UQCRB/QCR7, UQCRQ/QCR8, UQCR10/QCR9, UQCR11/QCR10 and a cleavage product of UQCRFS1). This cytochrome bc1 complex then forms a dimer. It depends on heme b as a cofactor.

It is found in the mitochondrion inner membrane. Its function is as follows. Component of the ubiquinol-cytochrome c reductase complex (complex III or cytochrome b-c1 complex) that is part of the mitochondrial respiratory chain. The b-c1 complex mediates electron transfer from ubiquinol to cytochrome c. Contributes to the generation of a proton gradient across the mitochondrial membrane that is then used for ATP synthesis. This chain is Cytochrome b (MT-CYB), found in Pygoscelis papua (Gentoo penguin).